The chain runs to 351 residues: MIESKGETAPSLNLNDVNVEENDAAQSFAEKVQRFRYQMKVHAAPRQKTLHSFLKKDNANIHDFTKVEKPHIRSSKSKVSYNSITSRVTKYFEEKNNSVDQLHSESLTPLSFGHTIPKKKPLLMTASVSEDSRVRVSKRQFKSKVVHPEIAISIAKRHKPKFPLSDELMNVEPGFHHSNIGCQITPYLWISSFRTNVYYLIGNEGDLLSQQVPSISGELNMLRGVCTRIDDDNRYDIEQAGSCFGMSVFPTSDSGEESFTTLESDPIVNCEHDEKKVADNLLVPQVMCSSNISTFFRSPGGKKLYHYLWKNSNALRISSNDLLEILLKHGVYVSLDTLHSWLQERNVNFEK.

This is an uncharacterized protein from Schizosaccharomyces pombe (strain 972 / ATCC 24843) (Fission yeast).